Reading from the N-terminus, the 21-residue chain is Cold shock protein CspSt (21 aa).

The 21-residue stretch at 1–21 (KNGTVKWFNAEKGFGFITSED) folds into the CSD domain.

The protein resides in the cytoplasm. The polypeptide is Cold shock protein CspSt (Streptococcus thermophilus).